Reading from the N-terminus, the 689-residue chain is Sodium-dependent phosphate transport protein 2B (689 aa).

A disordered region spans residues 1–41 (MAPWPELGDAQPNPDKYLEGAAGQQPTAPDKSKETNKNNTE). Residues 1 to 100 (MAPWPELGDA…LCVFQGIGRL (100 aa)) lie on the Cytoplasmic side of the membrane. Residues 101-121 (ILLLGFLYFFVCSLDILSSAF) traverse the membrane as a helical segment. At 122 to 135 (QLVGGKMAGQFFSN) the chain is on the extracellular side. Residues 136–156 (SSIMSNPLLGLVIGVLVTVLV) traverse the membrane as a helical segment. The Cytoplasmic portion of the chain corresponds to 157–212 (QSSSTSTSIVVSMVSSSLLTVRAAIPIIMGANIGTSITNTIVALMQVGDRSEFRRA). A helical transmembrane segment spans residues 213–233 (FAGATVHDFFNWLSVLVLLPV). Topologically, residues 234 to 362 (EVATHYLEII…FVNFHLPDLA (129 aa)) are extracellular. N-linked (GlcNAc...) asparagine glycans are attached at residues Asn-294, Asn-307, and Asn-320. The cysteines at positions 302 and 349 are disulfide-linked. The chain crosses the membrane as a helical span at residues 363–383 (VGTILLILSLLVLCGCLIMIV). Residues 384–407 (KILGSVLKGQVATVIKKTINTDFP) are Cytoplasmic-facing. The helical transmembrane segment at 408–428 (FPFAWLTGYLAILVGAGMTFI) threads the bilayer. Over 429–485 (VQSSSVFTSALTPLIGIGVITIERAYPLTLGSNIGTTTTAILAALASPGNALRSSLQ) the chain is Extracellular. A helical membrane pass occupies residues 486-506 (IALCHFFFNISGILLWYPIPF). At 507–525 (TRLPIRMAKGLGNISAKYR) the chain is on the cytoplasmic side. Residues 526–546 (WFAVFYLIIFFFLIPLTVFGL) traverse the membrane as a helical segment. The Extracellular portion of the chain corresponds to 547–552 (SLAGWR). The chain crosses the membrane as a helical span at residues 553 to 573 (VLVGVGVPVVFIIILVLCLRL). The Cytoplasmic portion of the chain corresponds to 574-687 (LQSRCPRVLP…PASDSKTECT (114 aa)).

The protein belongs to the SLC34A transporter family.

It is found in the apical cell membrane. The enzyme catalyses 3 Na(+)(out) + phosphate(out) = 3 Na(+)(in) + phosphate(in). Involved in actively transporting phosphate into cells via Na(+) cotransport. This is Sodium-dependent phosphate transport protein 2B (SLC34A2) from Pongo abelii (Sumatran orangutan).